A 383-amino-acid polypeptide reads, in one-letter code: S-adenosylmethionine synthase 1 (383 aa).

His-15 lines the ATP pocket. Mg(2+) is bound at residue Asp-17. Residue Glu-43 participates in K(+) binding. Residues Glu-56 and Gln-99 each coordinate L-methionine. Residues 99–109 (QSPDINLGVSR) are flexible loop. ATP is bound by residues 162–164 (DGK), 228–229 (RF), Asp-237, 243–244 (RK), Ala-260, and Lys-264. Asp-237 lines the L-methionine pocket. L-methionine is bound at residue Lys-268.

Belongs to the AdoMet synthase family. Homotetramer; dimer of dimers. Mg(2+) is required as a cofactor. Requires K(+) as cofactor.

It is found in the cytoplasm. The enzyme catalyses L-methionine + ATP + H2O = S-adenosyl-L-methionine + phosphate + diphosphate. It participates in amino-acid biosynthesis; S-adenosyl-L-methionine biosynthesis; S-adenosyl-L-methionine from L-methionine: step 1/1. Catalyzes the formation of S-adenosylmethionine (AdoMet) from methionine and ATP. The overall synthetic reaction is composed of two sequential steps, AdoMet formation and the subsequent tripolyphosphate hydrolysis which occurs prior to release of AdoMet from the enzyme. The chain is S-adenosylmethionine synthase 1 from Rhodopseudomonas palustris (strain BisB18).